The sequence spans 429 residues: Ribosomal RNA small subunit methyltransferase B (429 aa).

Residues 254 to 260, aspartate 277, aspartate 303, and aspartate 322 each bind S-adenosyl-L-methionine; that span reads CAAPGGK. Cysteine 375 (nucleophile) is an active-site residue. Positions 397–419 are disordered; it reads ALSETGTPDQPGQQNLPGGEEGD. The span at 400 to 412 shows a compositional bias: polar residues; sequence ETGTPDQPGQQNL.

This sequence belongs to the class I-like SAM-binding methyltransferase superfamily. RsmB/NOP family.

Its subcellular location is the cytoplasm. It catalyses the reaction cytidine(967) in 16S rRNA + S-adenosyl-L-methionine = 5-methylcytidine(967) in 16S rRNA + S-adenosyl-L-homocysteine + H(+). In terms of biological role, specifically methylates the cytosine at position 967 (m5C967) of 16S rRNA. This Salmonella paratyphi A (strain ATCC 9150 / SARB42) protein is Ribosomal RNA small subunit methyltransferase B.